Consider the following 734-residue polypeptide: Photosystem I P700 chlorophyll a apoprotein A2 (734 aa).

Helical transmembrane passes span 46-69 (IFAS…FHVA), 135-158 (LYIG…LHLQ), 175-199 (LNHH…HVAL), 273-291 (IAHH…GHMY), 330-353 (LHFQ…QHMY), 369-395 (AALY…IFFI), 417-439 (AIIS…LYVH), and 517-535 (FLVH…LILV). The [4Fe-4S] cluster site is built by Cys-559 and Cys-568. 2 helical membrane passes run 575-596 (AFYL…YWHW) and 643-665 (LSVW…MFLI). Residues His-654, Met-662, and Tyr-670 each contribute to the chlorophyll a site. Trp-671 serves as a coordination point for phylloquinone. Residues 707–727 (LVGLVHFSVGYIFTYAAFLIA) traverse the membrane as a helical segment.

The protein belongs to the PsaA/PsaB family. As to quaternary structure, the PsaA/B heterodimer binds the P700 chlorophyll special pair and subsequent electron acceptors. PSI consists of a core antenna complex that captures photons, and an electron transfer chain that converts photonic excitation into a charge separation. The eukaryotic PSI reaction center is composed of at least 11 subunits. P700 is a chlorophyll a/chlorophyll a' dimer, A0 is one or more chlorophyll a, A1 is one or both phylloquinones and FX is a shared 4Fe-4S iron-sulfur center. is required as a cofactor.

The protein localises to the plastid. It is found in the chloroplast thylakoid membrane. It carries out the reaction reduced [plastocyanin] + hnu + oxidized [2Fe-2S]-[ferredoxin] = oxidized [plastocyanin] + reduced [2Fe-2S]-[ferredoxin]. Functionally, psaA and PsaB bind P700, the primary electron donor of photosystem I (PSI), as well as the electron acceptors A0, A1 and FX. PSI is a plastocyanin-ferredoxin oxidoreductase, converting photonic excitation into a charge separation, which transfers an electron from the donor P700 chlorophyll pair to the spectroscopically characterized acceptors A0, A1, FX, FA and FB in turn. Oxidized P700 is reduced on the lumenal side of the thylakoid membrane by plastocyanin. The chain is Photosystem I P700 chlorophyll a apoprotein A2 from Gnetum parvifolium (Small-leaved jointfir).